The primary structure comprises 363 residues: Transcription factor PIF6 (363 aa).

Disordered stretches follow at residues 154-204 (SEGS…RNDI) and 340-363 (IPNP…KTNR). A compositionally biased stretch (basic residues) spans 178-188 (RTRKALVKRKR). The region spanning 188 to 237 (RNAEAYNSPERNQRNDINKKMRTLQNLLPNSHKDDNESMLDEAINYMTNL) is the bHLH domain. Over residues 340-350 (IPNPNSLSNLD) the composition is skewed to polar residues. Positions 354–363 (LHKKSRKTNR) are enriched in basic residues.

As to quaternary structure, homodimer. Interacts with APRR1/TOC1. Binds to RGL2 and RGA. Associates to PTAC12/HMR/PAP5 which acts as a transcriptional coactivator. As to expression, mainly expressed in fruits and flowers and, to a lower extent, in leaves, stems, seedlings and roots.

The protein localises to the nucleus. In terms of biological role, transcription factor. The chain is Transcription factor PIF6 from Arabidopsis thaliana (Mouse-ear cress).